The sequence spans 136 residues: Small ribosomal subunit protein uS11c (136 aa).

The protein belongs to the universal ribosomal protein uS11 family. As to quaternary structure, part of the 30S ribosomal subunit.

The protein localises to the plastid. Its subcellular location is the chloroplast. The polypeptide is Small ribosomal subunit protein uS11c (Guizotia abyssinica (Niger)).